We begin with the raw amino-acid sequence, 153 residues long: Transcriptional repressor NrdR (153 aa).

The tract at residues 1 to 20 (MKCPFCNSADTRVKNSRHSD) is disordered. A zinc finger lies at 3 to 34 (CPFCNSADTRVKNSRHSDDNMSVRRRRLCEVC). Basic and acidic residues predominate over residues 11–20 (TRVKNSRHSD). The ATP-cone domain maps to 49-139 (IMVLKKDGRM…VYMDFSDADD (91 aa)).

It belongs to the NrdR family. Zn(2+) serves as cofactor.

Negatively regulates transcription of bacterial ribonucleotide reductase nrd genes and operons by binding to NrdR-boxes. The polypeptide is Transcriptional repressor NrdR (Anaplasma phagocytophilum (strain HZ)).